The following is a 384-amino-acid chain: UDP-galactopyranose mutase (384 aa).

The N-terminal stretch at 1–23 (MKSKKILIVGAGFSGAVIGRQLA) is a signal peptide. FAD contacts are provided by residues Ser14, 33 to 34 (DQ), Asn41, and 60 to 61 (HI). Residues Asn84, Phe151, Thr156, Trp160, and Tyr185 each coordinate UDP-alpha-D-galactose. Residue Phe219 participates in FAD binding. 3 residues coordinate UDP-alpha-D-galactose: Asn270, Arg280, and Tyr314. Arg343 is an FAD binding site. Tyr349 contributes to the UDP-alpha-D-galactose binding site. Residue 350–355 (LDMDVT) coordinates FAD.

Belongs to the UDP-galactopyranose/dTDP-fucopyranose mutase family. In terms of assembly, homodimer. The cofactor is FAD.

It carries out the reaction UDP-alpha-D-galactose = UDP-alpha-D-galactofuranose. The protein operates within bacterial outer membrane biogenesis; LPS O-antigen biosynthesis. Its function is as follows. Involved in the biosynthesis of the galactose-containing O-side-chain polysaccharide backbone structure of D-galactan I which is a key component of lipopolysaccharide (LPS). Catalyzes the interconversion through a 2-keto intermediate of uridine diphosphogalactopyranose (UDP-GalP) into uridine diphosphogalactofuranose (UDP-GalF) which is the biosynthetic precursor of galactofuranosyl residues. The protein is UDP-galactopyranose mutase (rfbD) of Klebsiella pneumoniae.